Here is a 527-residue protein sequence, read N- to C-terminus: Glucose-6-phosphate isomerase (527 aa).

Glu323 serves as the catalytic Proton donor. Catalysis depends on residues His352 and Lys454.

It belongs to the GPI family.

The protein resides in the cytoplasm. It catalyses the reaction alpha-D-glucose 6-phosphate = beta-D-fructose 6-phosphate. It participates in carbohydrate biosynthesis; gluconeogenesis. It functions in the pathway carbohydrate degradation; glycolysis; D-glyceraldehyde 3-phosphate and glycerone phosphate from D-glucose: step 2/4. In terms of biological role, catalyzes the reversible isomerization of glucose-6-phosphate to fructose-6-phosphate. This is Glucose-6-phosphate isomerase from Prochlorococcus marinus (strain MIT 9312).